The following is a 202-amino-acid chain: MMIIVMLLLSYLIGAFPSGFVIGKLFFKKDIRQFGSGNTGATNSFRVLGRPAGFLVTFLDIFKGFITVFFPLWLQVHADGPISTFFTNGLIVGLFAILGHVYPVYLKFQGGKAVATSAGVVLGVNPILLLILAIIFFIVLKIFKYVSLASIVAAICCVIGSLIIQDYILLVVSFLVSIILIIRHRSNIARIFRGEEPKIKWM.

A run of 6 helical transmembrane segments spans residues 2–22, 54–74, 85–105, 120–140, 141–161, and 162–182; these read MIIV…GFVI, FLVT…PLWL, FFTN…YPVY, VVLG…FIVL, KIFK…VIGS, and LIIQ…ILII.

Belongs to the PlsY family. Probably interacts with PlsX.

It localises to the cell membrane. The enzyme catalyses an acyl phosphate + sn-glycerol 3-phosphate = a 1-acyl-sn-glycero-3-phosphate + phosphate. The protein operates within lipid metabolism; phospholipid metabolism. In terms of biological role, catalyzes the transfer of an acyl group from acyl-phosphate (acyl-PO(4)) to glycerol-3-phosphate (G3P) to form lysophosphatidic acid (LPA). This enzyme utilizes acyl-phosphate as fatty acyl donor, but not acyl-CoA or acyl-ACP. The sequence is that of Glycerol-3-phosphate acyltransferase from Staphylococcus aureus (strain USA300).